A 346-amino-acid polypeptide reads, in one-letter code: Aldose 1-epimerase (346 aa).

Residue Arg-79 participates in substrate binding. The Proton donor role is filled by His-175. Asp-245 contributes to the substrate binding site. Glu-309 acts as the Proton acceptor in catalysis.

It belongs to the aldose epimerase family.

It is found in the cytoplasm. It carries out the reaction alpha-D-glucose = beta-D-glucose. It functions in the pathway carbohydrate metabolism; hexose metabolism. Mutarotase converts alpha-aldose to the beta-anomer. It is active on D-glucose, L-arabinose, D-xylose, D-galactose, maltose and lactose. This Escherichia coli (strain K12) protein is Aldose 1-epimerase (galM).